The following is a 282-amino-acid chain: MQEIFLCSISNVRSGDCKEDCAYCTQSSHHQGAIKRYKFKDEKVVLQEARALRELGALGFCLVTSGRELDDEKCEYIAKLAKAINQEELGLHLIACCGRADLDQLEFLRDAGIHSYNHNLETSQNFFPKICSTHTWEERFITCENALRAGLGLCSGGIFGLNESWEDRIEMLRALASLSPHTTPINFFIKNPVLPIDAETLSADEALECVLLAKEFLPNARLMAAGGREVVFKDNDKKEAKLFEYGINAVVLGDYLTTKGKAPKKDIERLLSYGLKMAASCH.

Residues 1 to 228 (MQEIFLCSIS…NARLMAAGGR (228 aa)) form the Radical SAM core domain. [4Fe-4S] cluster-binding residues include cysteine 17, cysteine 21, and cysteine 24. The [2Fe-2S] cluster site is built by cysteine 61, cysteine 96, cysteine 154, and arginine 221.

The protein belongs to the radical SAM superfamily. Biotin synthase family. In terms of assembly, homodimer. The cofactor is [4Fe-4S] cluster. It depends on [2Fe-2S] cluster as a cofactor.

It catalyses the reaction (4R,5S)-dethiobiotin + (sulfur carrier)-SH + 2 reduced [2Fe-2S]-[ferredoxin] + 2 S-adenosyl-L-methionine = (sulfur carrier)-H + biotin + 2 5'-deoxyadenosine + 2 L-methionine + 2 oxidized [2Fe-2S]-[ferredoxin]. Its pathway is cofactor biosynthesis; biotin biosynthesis; biotin from 7,8-diaminononanoate: step 2/2. Functionally, catalyzes the conversion of dethiobiotin (DTB) to biotin by the insertion of a sulfur atom into dethiobiotin via a radical-based mechanism. This Helicobacter acinonychis (strain Sheeba) protein is Biotin synthase.